Consider the following 410-residue polypeptide: Lysosome-associated membrane glycoprotein 2 (410 aa).

Positions 1-28 (MVCFRLFPVPGSGLVLVCLVLGAVRSYA) are cleaved as a signal peptide. The interval 29 to 192 (LELNLTDSEN…STNEFLCDKD (164 aa)) is first lumenal domain. The Lumenal portion of the chain corresponds to 29 to 375 (LELNLTDSEN…QDCSADDDNF (347 aa)). N-linked (GlcNAc...) (polylactosaminoglycan) asparagine glycosylation is found at N32 and N38. C41 and C79 are oxidised to a cystine. N-linked (GlcNAc...) asparagine glycosylation is found at N49, N58, N75, N101, N123, and N179. C153 and C189 form a disulfide bridge. Residues 193–228 (KTSTVAPTIHTTVPSPTTTPTPKEKPEAGTYSVNNG) are hinge. The O-linked (GalNAc...) serine glycan is linked to S195. Residues T196, T200, T203, and T204 are each glycosylated (O-linked (GalNAc...) threonine). The segment covering 199–213 (PTIHTTVPSPTTTPT) has biased composition (low complexity). Residues 199–221 (PTIHTTVPSPTTTPTPKEKPEAG) are disordered. S207 carries an O-linked (GalNAc...) serine; partial glycan. An O-linked (GalNAc...) threonine; partial glycan is attached at T209. O-linked (GalNAc...) threonine glycosylation is found at T210 and T211. An O-linked (GalNAc...) threonine; partial glycan is attached at T213. N-linked (GlcNAc...) asparagine glycosylation is found at N229, N242, N257, N275, and N300. Residues 229 to 375 (NDTCLLATMG…QDCSADDDNF (147 aa)) form a second lumenal domain region. A disulfide bridge connects residues C232 and C265. The N-linked (GlcNAc...) (polylactosaminoglycan) asparagine glycan is linked to N307. N-linked (GlcNAc...) asparagine glycosylation is found at N317 and N356. Cysteines 331 and 368 form a disulfide. A helical transmembrane segment spans residues 376–399 (LVPIAVGAALAGVLILVLLAYFIG). Residues 400-410 (LKHHHAGYEQF) lie on the Cytoplasmic side of the membrane. The interval 401-404 (KHHH) is important for binding and subsequent lysosomal degradation of target proteins.

It belongs to the LAMP family. In terms of assembly, monomer. Homodimer. Homotrimer. Forms large homooligomers. Interacts (via its cytoplasmic region) with HSPA8; HSPA8 mediates recruitment of proteins with a KFERQ motif to the surface of the lysosome for chaperone-mediated autophagy. Interacts with HSP90 in the lysosome lumen; this enhances LAMP2 stability. Interacts with MLLT11. Interacts with ABCB9. Interacts with FURIN. Interacts with CT55; this interaction may be important for LAMP2 protein stability. Interacts with TMEM175; inhibiting the proton channel activity of TMEM175. Forms a ternary complex with RAB7A and RUFY4 (via RUN domain); the interaction with RAB7A is mediated by RUFY4 (via RUN and coiled coil domains). (Microbial infection) Interacts with mumps virus protein F; this interaction promotes protein F cleavage by FURIN. O- and N-glycosylated; some of the 16 N-linked glycans are polylactosaminoglycans. In terms of tissue distribution, isoform LAMP-2A is highly expressed in placenta, lung and liver, less in kidney and pancreas, low in brain and skeletal muscle. Isoform LAMP-2B is detected in spleen, thymus, prostate, testis, small intestine, colon, skeletal muscle, brain, placenta, lung, kidney, ovary and pancreas and liver. Isoform LAMP-2C is detected in small intestine, colon, heart, brain, skeletal muscle, and at lower levels in kidney and placenta.

The protein resides in the lysosome membrane. Its subcellular location is the endosome membrane. The protein localises to the cell membrane. It localises to the cytoplasmic vesicle. It is found in the autophagosome membrane. In terms of biological role, lysosomal membrane glycoprotein which plays an important role in lysosome biogenesis, lysosomal pH regulation and autophagy. Acts as an important regulator of lysosomal lumen pH regulation by acting as a direct inhibitor of the proton channel TMEM175, facilitating lysosomal acidification for optimal hydrolase activity. Plays an important role in chaperone-mediated autophagy, a process that mediates lysosomal degradation of proteins in response to various stresses and as part of the normal turnover of proteins with a long biological half-live. Functions by binding target proteins, such as GAPDH, NLRP3 and MLLT11, and targeting them for lysosomal degradation. In the chaperone-mediated autophagy, acts downstream of chaperones, such as HSPA8/HSC70, which recognize and bind substrate proteins and mediate their recruitment to lysosomes, where target proteins bind LAMP2. Plays a role in lysosomal protein degradation in response to starvation. Required for the fusion of autophagosomes with lysosomes during autophagy. Cells that lack LAMP2 express normal levels of VAMP8, but fail to accumulate STX17 on autophagosomes, which is the most likely explanation for the lack of fusion between autophagosomes and lysosomes. Required for normal degradation of the contents of autophagosomes. Required for efficient MHC class II-mediated presentation of exogenous antigens via its function in lysosomal protein degradation; antigenic peptides generated by proteases in the endosomal/lysosomal compartment are captured by nascent MHC II subunits. Is not required for efficient MHC class II-mediated presentation of endogenous antigens. Functionally, modulates chaperone-mediated autophagy. Decreases presentation of endogenous antigens by MHCII. Does not play a role in the presentation of exogenous and membrane-derived antigens by MHCII. Its function is as follows. (Microbial infection) Supports the FURIN-mediated cleavage of mumps virus fusion protein F by interacting with both FURIN and the unprocessed form but not the processed form of the viral protein F. The protein is Lysosome-associated membrane glycoprotein 2 (LAMP2) of Homo sapiens (Human).